The following is a 172-amino-acid chain: Zinc finger C2HC domain-containing protein 1B (172 aa).

2 consecutive C2HC/C3H-type zinc fingers follow at residues 14 to 43 (KLFP…VFNK) and 117 to 146 (DYIQ…QTSR). 8 residues coordinate Zn(2+): cysteine 18, cysteine 21, histidine 33, cysteine 37, cysteine 121, cysteine 124, histidine 136, and cysteine 140.

Belongs to the ZC2HC1 family. Requires Zn(2+) as cofactor.

The chain is Zinc finger C2HC domain-containing protein 1B (Zc2hc1b) from Mus musculus (Mouse).